An 88-amino-acid chain; its full sequence is Small ribosomal subunit protein bS18A (88 aa).

The protein belongs to the bacterial ribosomal protein bS18 family. In terms of assembly, part of the 30S ribosomal subunit. Forms a tight heterodimer with protein bS6.

In terms of biological role, binds as a heterodimer with protein bS6 to the central domain of the 16S rRNA, where it helps stabilize the platform of the 30S subunit. This chain is Small ribosomal subunit protein bS18A, found in Mycolicibacterium gilvum (strain PYR-GCK) (Mycobacterium gilvum (strain PYR-GCK)).